Reading from the N-terminus, the 100-residue chain is Chorion class A protein M2774 (100 aa).

The left arm stretch occupies residues 1–33 (GGGWNGWNGLGGGWNGLGVGWSRLDGGYGGGCG). The central domain stretch occupies residues 34–81 (SYGGEGIGNVGVADELPVGGVTAVGGRVPIIGGVEYGGPARAAGAVSI). The right arm stretch occupies residues 82–100 (CGHCAPTCGCGRAGLGGYY).

It belongs to the chorion protein family.

This protein is one of many from the eggshell of the silk moth. This is Chorion class A protein M2774 from Bombyx mori (Silk moth).